The chain runs to 106 residues: uncharacterized protein (106 aa).

The disordered stretch occupies residues 28–68 (SSANEPKKLPNKKLVSTKSHTQVNREKSKNKDTYEDYSDSN). Positions 50-61 (VNREKSKNKDTY) are enriched in basic and acidic residues.

This is an uncharacterized protein from Acanthamoeba polyphaga (Amoeba).